Here is a 512-residue protein sequence, read N- to C-terminus: Cytochrome P450 72A13 (512 aa).

The chain crosses the membrane as a helical span at residues 2-22; the sequence is EISVASVTVSVAVVVVSWWVW. Cys460 lines the heme pocket.

Belongs to the cytochrome P450 family. It depends on heme as a cofactor.

It localises to the membrane. In Arabidopsis thaliana (Mouse-ear cress), this protein is Cytochrome P450 72A13 (CYP72A13).